Reading from the N-terminus, the 86-residue chain is MAEDIKTKIKNYKTAPFDSRFPNQNQTRNCWQNYLDFHRCEKAMTAKGGDVSVCEWYRRVYKSLCPISWVSTWDDRRAEGTFPGKI.

The residue at position 2 (Ala2) is an N-acetylalanine. The CHCH domain occupies 27-73; that stretch reads TRNCWQNYLDFHRCEKAMTAKGGDVSVCEWYRRVYKSLCPISWVSTW. The short motif at 30-40 is the Cx9C motif element; sequence CWQNYLDFHRC. 2 disulfides stabilise this stretch: Cys30-Cys65 and Cys40-Cys54. The short motif at 54-65 is the Cx10C motif element; the sequence is CEWYRRVYKSLC. Position 62 is an N6-acetyllysine (Lys62).

The protein belongs to the cytochrome c oxidase subunit 6B family. Component of the cytochrome c oxidase (complex IV, CIV), a multisubunit enzyme composed of 14 subunits. The complex is composed of a catalytic core of 3 subunits MT-CO1, MT-CO2 and MT-CO3, encoded in the mitochondrial DNA, and 11 supernumerary subunits COX4I, COX5A, COX5B, COX6A, COX6B, COX6C, COX7A, COX7B, COX7C, COX8 and NDUFA4, which are encoded in the nuclear genome. The complex exists as a monomer or a dimer and forms supercomplexes (SCs) in the inner mitochondrial membrane with NADH-ubiquinone oxidoreductase (complex I, CI) and ubiquinol-cytochrome c oxidoreductase (cytochrome b-c1 complex, complex III, CIII), resulting in different assemblies (supercomplex SCI(1)III(2)IV(1) and megacomplex MCI(2)III(2)IV(2)).

The protein localises to the mitochondrion inner membrane. The protein operates within energy metabolism; oxidative phosphorylation. Component of the cytochrome c oxidase, the last enzyme in the mitochondrial electron transport chain which drives oxidative phosphorylation. The respiratory chain contains 3 multisubunit complexes succinate dehydrogenase (complex II, CII), ubiquinol-cytochrome c oxidoreductase (cytochrome b-c1 complex, complex III, CIII) and cytochrome c oxidase (complex IV, CIV), that cooperate to transfer electrons derived from NADH and succinate to molecular oxygen, creating an electrochemical gradient over the inner membrane that drives transmembrane transport and the ATP synthase. Cytochrome c oxidase is the component of the respiratory chain that catalyzes the reduction of oxygen to water. Electrons originating from reduced cytochrome c in the intermembrane space (IMS) are transferred via the dinuclear copper A center (CU(A)) of subunit 2 and heme A of subunit 1 to the active site in subunit 1, a binuclear center (BNC) formed by heme A3 and copper B (CU(B)). The BNC reduces molecular oxygen to 2 water molecules using 4 electrons from cytochrome c in the IMS and 4 protons from the mitochondrial matrix. In Carlito syrichta (Philippine tarsier), this protein is Cytochrome c oxidase subunit 6B1 (COX6B1).